The primary structure comprises 215 residues: Chaperone protein TorD (215 aa).

Belongs to the TorD/DmsD family. TorD subfamily.

The protein localises to the cytoplasm. Involved in the biogenesis of TorA. Acts on TorA before the insertion of the molybdenum cofactor and, as a result, probably favors a conformation of the apoenzyme that is competent for acquiring the cofactor. This chain is Chaperone protein TorD, found in Vibrio parahaemolyticus serotype O3:K6 (strain RIMD 2210633).